Reading from the N-terminus, the 618-residue chain is DnaJ homolog subfamily C member 2 (618 aa).

One can recognise a J domain in the interval 85-158; that stretch reads DHYAVLGLAH…VKRRAFDSVD (74 aa). Disordered regions lie at residues 281 to 315, 330 to 349, and 419 to 448; these read KEEE…QQEE, QAAQ…IKKE, and LQKE…QNNR. The span at 428 to 448 shows a compositional bias: polar residues; sequence QAQQAARGSEHSSAAGGQNNR. SANT domains are found at residues 445–507 and 548–603; these read QNNR…KLDP and SNAA…EMIK.

As to quaternary structure, component of ribosome-associated complex (RAC).

It is found in the nucleus. The protein localises to the cytoplasm. The protein resides in the cytosol. Functionally, acts both as a chaperone in the cytosol and as a chromatin regulator in the nucleus. When cytosolic, acts as a molecular chaperone: component of the ribosome-associated complex (RAC), a complex involved in folding or maintaining nascent polypeptides in a folding-competent state. When nuclear, mediates the switching from polycomb-repressed genes to an active state: specifically recruited at histone H2A ubiquitinated at 'Lys-119' (H2AK119ub), and promotes the displacement of the polycomb PRC1 complex from chromatin, thereby facilitating transcription activation. This chain is DnaJ homolog subfamily C member 2 (dnajc2), found in Danio rerio (Zebrafish).